A 502-amino-acid chain; its full sequence is Histidine--tRNA ligase (502 aa).

It belongs to the class-II aminoacyl-tRNA synthetase family. Homodimer.

It is found in the cytoplasm. It carries out the reaction tRNA(His) + L-histidine + ATP = L-histidyl-tRNA(His) + AMP + diphosphate + H(+). This is Histidine--tRNA ligase from Brucella suis (strain ATCC 23445 / NCTC 10510).